The following is a 336-amino-acid chain: tRNA N6-adenosine threonylcarbamoyltransferase (336 aa).

2 residues coordinate Fe cation: H114 and H118. Residues 136 to 140 (LVSGG), D169, G182, D186, and N275 contribute to the substrate site. D302 serves as a coordination point for Fe cation.

Belongs to the KAE1 / TsaD family. Fe(2+) serves as cofactor.

It is found in the cytoplasm. It carries out the reaction L-threonylcarbamoyladenylate + adenosine(37) in tRNA = N(6)-L-threonylcarbamoyladenosine(37) in tRNA + AMP + H(+). Its function is as follows. Required for the formation of a threonylcarbamoyl group on adenosine at position 37 (t(6)A37) in tRNAs that read codons beginning with adenine. Is involved in the transfer of the threonylcarbamoyl moiety of threonylcarbamoyl-AMP (TC-AMP) to the N6 group of A37, together with TsaE and TsaB. TsaD likely plays a direct catalytic role in this reaction. The polypeptide is tRNA N6-adenosine threonylcarbamoyltransferase (Streptococcus agalactiae serotype Ia (strain ATCC 27591 / A909 / CDC SS700)).